The primary structure comprises 484 residues: Protein arginine methyltransferase NDUFAF7 homolog, mitochondrial (484 aa).

Residues 1–12 constitute a mitochondrion transit peptide; sequence MFRSITQRVIRN.

The protein belongs to the NDUFAF7 family. In terms of assembly, homodimer. Interacts with ndufs2.

It is found in the mitochondrion. The catalysed reaction is L-arginyl-[protein] + 2 S-adenosyl-L-methionine = N(omega),N(omega)'-dimethyl-L-arginyl-[protein] + 2 S-adenosyl-L-homocysteine + 2 H(+). Its function is as follows. Involved in the assembly or stability of mitochondrial NADH:ubiquinone oxidoreductase complex (complex I). Acts as an arginine methyltransferase and probably acts by mediating arginine methylation of ndufs2. The polypeptide is Protein arginine methyltransferase NDUFAF7 homolog, mitochondrial (Dictyostelium discoideum (Social amoeba)).